A 497-amino-acid polypeptide reads, in one-letter code: MAEKYVIAIDEGTTSARAIVFDKELNILGIGQNEFTQYYPQPGYVEHSPEEIWQAQLLAINKALEKAKIDRNNILSIGITNQRETTVMWDTRTGKPIYNAIVWQDRRTAPITDYLKANYLRLIKDRTGLVPDPYFSASKIKWILDNIPNAREKAEKGEIKFGTIDTYLIWKLTNGKAHVTDYSNASRTMLFNIRKLEWDREILEILNIPEAILPDVKPSSEIYGYAEILNSSIPISGDAGDQQAALFGQIAFNQGDVKCTYGTGSFILLNTGSNLVSSNDLLTTIAWGVGKGITYALEGSIFITGAAVQWFRDGLRAIDVSDEIEPLAGSVPDNGGVYFVPAFTGLGAPYWDPYARGLIIGITRGTTKAHIARAILESMAYQTMDVLGIMQRDSGIKIDALKVDGGASKNDLLMQFQADILKMKVVRPKIMETTSMGVAMLAGLSVGYWNSMDELKQKWKIDQVFEPKMDDEYREKLYSGWKEAVRRALGWAKTIGG.

Residue threonine 13 coordinates ADP. ATP contacts are provided by threonine 13, threonine 14, and serine 15. Residue threonine 13 coordinates sn-glycerol 3-phosphate. Arginine 17 contributes to the ADP binding site. Sn-glycerol 3-phosphate-binding residues include arginine 83, glutamate 84, tyrosine 134, and aspartate 241. Glycerol contacts are provided by arginine 83, glutamate 84, tyrosine 134, aspartate 241, and glutamine 242. Positions 263 and 305 each coordinate ADP. Residues threonine 263, glycine 305, glutamine 309, and glycine 406 each coordinate ATP. Residues glycine 406 and asparagine 410 each contribute to the ADP site.

Belongs to the FGGY kinase family.

It carries out the reaction glycerol + ATP = sn-glycerol 3-phosphate + ADP + H(+). It functions in the pathway polyol metabolism; glycerol degradation via glycerol kinase pathway; sn-glycerol 3-phosphate from glycerol: step 1/1. In terms of biological role, key enzyme in the regulation of glycerol uptake and metabolism. Catalyzes the phosphorylation of glycerol to yield sn-glycerol 3-phosphate. This is Glycerol kinase 2 from Sulfolobus acidocaldarius (strain ATCC 33909 / DSM 639 / JCM 8929 / NBRC 15157 / NCIMB 11770).